We begin with the raw amino-acid sequence, 110 residues long: Parvalbumin alpha (110 aa).

Ser-2 carries the N-acetylserine modification. Ser-2 and Ser-24 each carry phosphoserine. EF-hand domains follow at residues 39-74 (KSADDVKKVFHILDKDKSGFIEEDELGFILKGFSPD) and 78-110 (LSAKETKTLMAAGDKDGDGKIGVDEFSTLVAES). Residues Asp-52, Asp-54, Ser-56, Phe-58, Glu-60, Glu-63, Asp-91, Asp-93, Asp-95, Lys-97, and Glu-102 each coordinate Ca(2+).

The protein belongs to the parvalbumin family.

In terms of biological role, in muscle, parvalbumin is thought to be involved in relaxation after contraction. It binds two calcium ions. The chain is Parvalbumin alpha (PVALB) from Macaca fuscata fuscata (Japanese macaque).